The following is a 99-amino-acid chain: Small ribosomal subunit protein bS21 (99 aa).

The tract at residues 60–99 is disordered; that stretch reads KKLQREGLLPMKPKPVFGAGPGGDRRGPGAGPGAGPRPAR.

The protein belongs to the bacterial ribosomal protein bS21 family.

This is Small ribosomal subunit protein bS21 from Rhodopseudomonas palustris (strain BisA53).